The primary structure comprises 1063 residues: Cellulose synthase A catalytic subunit 7 [UDP-forming] (1063 aa).

At 1 to 213 the chain is on the cytoplasmic side; it reads MDTASVTGGE…IPSSKINPYR (213 aa). Positions 18, 21, 37, 40, 45, 48, 60, and 63 each coordinate Zn(2+). The segment at 18-64 adopts an RING-type; degenerate zinc-finger fold; it reads CRVCGEEVAAREDGKPFVACAECGFPVCKPCYEYERSEGTQCCPQCN. Residues 116–154 form a disordered region; that stretch reads NGEQPAQKWRPGGPALSSFTGSVAGKDLEQEREMEGGME. Residues 141–154 show a composition bias toward basic and acidic residues; it reads KDLEQEREMEGGME. A helical transmembrane segment spans residues 214–234; it reads IVIVLRLVVLCFFLKFRITTP. Residues 235 to 237 lie on the Extracellular side of the membrane; that stretch reads AMD. A helical transmembrane segment spans residues 238-258; it reads AVPLWLASVICELWFALSWIL. At 259–845 the chain is on the cytoplasmic side; that stretch reads DQLPKWSPVT…TNTIVYPFTS (587 aa). Residues serine 297, lysine 303, glutamate 304, and aspartate 333 each coordinate UDP-alpha-D-glucose. Residue aspartate 333 is part of the active site. A coiled-coil region spans residues 387-414; it reads VKERRAMKREYEEFKVRINALVAKAQKK. Lysine 474 lines the UDP-alpha-D-glucose pocket. 2 residues coordinate Mn(2+): lysine 475 and aspartate 499. Aspartate 762 is an active-site residue. A helical membrane pass occupies residues 846 to 866; sequence IPLLAYCTIPAVCLLTGKFII. The Extracellular segment spans residues 867-871; sequence PTLNN. A helical transmembrane segment spans residues 872–892; that stretch reads LASIWFIALFLSIIATGVLEL. The Cytoplasmic segment spans residues 893–907; it reads RWSGVSIEDWWRNEQ. A helical transmembrane segment spans residues 908 to 928; that stretch reads FWVIGGVSAHLFAVFQGLLKV. Residues 929-959 lie on the Extracellular side of the membrane; that stretch reads LGGVDTNFTVTSKAAADETDAFGELYLFKWT. An N-linked (GlcNAc...) asparagine glycan is attached at asparagine 935. Residues 960 to 980 form a helical membrane-spanning segment; that stretch reads TLLVPPTTLIIINMVGIVAGV. Residues 981-991 lie on the Cytoplasmic side of the membrane; the sequence is SDAVNNGYGSW. Residues 992–1012 form a helical membrane-spanning segment; the sequence is GPLFGKLFFSFWVILHLYPFL. Over 1013 to 1021 the chain is Extracellular; the sequence is KGLMGRQNR. The helical transmembrane segment at 1022 to 1042 threads the bilayer; the sequence is TPTIVVLWSILLASIFSLVWV. At 1043-1063 the chain is on the cytoplasmic side; it reads RIDPFIPKPKGPVLKPCGVSC.

This sequence belongs to the glycosyltransferase 2 family. Plant cellulose synthase subfamily. The cofactor is Mn(2+). Zn(2+) serves as cofactor.

It localises to the cell membrane. The catalysed reaction is [(1-&gt;4)-beta-D-glucosyl](n) + UDP-alpha-D-glucose = [(1-&gt;4)-beta-D-glucosyl](n+1) + UDP + H(+). The protein operates within glycan metabolism; plant cellulose biosynthesis. In terms of biological role, catalytic subunit of cellulose synthase terminal complexes ('rosettes'), required for beta-1,4-glucan microfibril crystallization, a major mechanism of the cell wall formation. Involved in the secondary cell wall formation. The polypeptide is Cellulose synthase A catalytic subunit 7 [UDP-forming] (CESA7) (Oryza sativa subsp. japonica (Rice)).